Reading from the N-terminus, the 568-residue chain is Periplasmic trehalase (568 aa).

Residues 1–38 form the signal peptide; it reads MPHAPARSGDAMSAAAPPCCTSLLGLSLSMFVAPCALA. Substrate-binding positions include R169, 176 to 177, N213, 222 to 224, 294 to 296, and G327; these read WD, RSQ, and RPE. Residues D329 and E511 each act as proton donor/acceptor in the active site. Substrate is bound at residue E526.

It belongs to the glycosyl hydrolase 37 family.

The protein localises to the periplasm. It carries out the reaction alpha,alpha-trehalose + H2O = alpha-D-glucose + beta-D-glucose. Functionally, provides the cells with the ability to utilize trehalose at high osmolarity by splitting it into glucose molecules that can subsequently be taken up by the phosphotransferase-mediated uptake system. The chain is Periplasmic trehalase from Xanthomonas campestris pv. campestris (strain 8004).